A 1001-amino-acid polypeptide reads, in one-letter code: Serine/threonine-protein kinase TAO1 (1001 aa).

Ser-9 is modified (phosphoserine). Positions 28-281 constitute a Protein kinase domain; sequence FTDLREIGHG…SEELLKHIFV (254 aa). ATP is bound by residues 34 to 42 and Lys-57; that span reads IGHGSFGAV. The Proton acceptor role is filled by Asp-151. The disordered stretch occupies residues 324 to 433; sequence PAVEAQEEEE…QVSRHKSHYR (110 aa). A compositionally biased stretch (low complexity) spans 350–373; the sequence is SNQSIPSMSISASSQSSSVNSLPD. 2 stretches are compositionally biased toward basic and acidic residues: residues 375 to 388 and 399 to 416; these read SDDK…EGDH and LKPE…RTRA. Ser-421 and Ser-445 each carry phosphoserine. A coiled-coil region spans residues 458–651; that stretch reads SELREQMSGY…QTQKDLEHAM (194 aa). Residues 567 to 587 form a disordered region; that stretch reads KEELNENQSTPKKEKQEWLSK. Over residues 577–587 the composition is skewed to basic and acidic residues; the sequence is PKKEKQEWLSK. The residue at position 669 (Thr-669) is a Phosphothreonine. A coiled-coil region spans residues 754 to 877; it reads KAVLKRLKEE…LERQAREIEA (124 aa). A disordered region spans residues 911 to 1001; it reads SHNPTGGPGP…ISNGSHMSYT (91 aa). A Phosphoserine modification is found at Ser-965. A compositionally biased stretch (polar residues) spans 975–1001; it reads GGRTEQGMSRSTSVTSQISNGSHMSYT.

The protein belongs to the protein kinase superfamily. STE Ser/Thr protein kinase family. STE20 subfamily. Self-associates. Interacts with MAP2K3. Interacts with SPRED1. Interacts with TESK1; the interaction inhibits TAOK1 kinase activity. Interacts with MAP3K7. Post-translationally, proteolytically processed by caspase-3 (CASP3). In terms of processing, autophosphorylated. Phosphorylated by ATM in response to DNA damage. Phosphorylated by LRRK2. In terms of tissue distribution, highly expressed in the testis, and to a lower extent also expressed in brain, placenta, colon and skeletal muscle.

It localises to the cytoplasm. The enzyme catalyses L-seryl-[protein] + ATP = O-phospho-L-seryl-[protein] + ADP + H(+). The catalysed reaction is L-threonyl-[protein] + ATP = O-phospho-L-threonyl-[protein] + ADP + H(+). Serine/threonine-protein kinase activity is inhibited by SPRED1. Functionally, serine/threonine-protein kinase involved in various processes such as p38/MAPK14 stress-activated MAPK cascade, DNA damage response and regulation of cytoskeleton stability. Phosphorylates MAP2K3, MAP2K6 and MARK2. Acts as an activator of the p38/MAPK14 stress-activated MAPK cascade by mediating phosphorylation and subsequent activation of the upstream MAP2K3 and MAP2K6 kinases. Involved in G-protein coupled receptor signaling to p38/MAPK14. In response to DNA damage, involved in the G2/M transition DNA damage checkpoint by activating the p38/MAPK14 stress-activated MAPK cascade, probably by mediating phosphorylation of MAP2K3 and MAP2K6. Acts as a regulator of cytoskeleton stability by phosphorylating 'Thr-208' of MARK2, leading to activate MARK2 kinase activity and subsequent phosphorylation and detachment of MAPT/TAU from microtubules. Also acts as a regulator of apoptosis: regulates apoptotic morphological changes, including cell contraction, membrane blebbing and apoptotic bodies formation via activation of the MAPK8/JNK cascade. Plays an essential role in the regulation of neuronal development in the central nervous system. Also plays a role in the regulation of neuronal migration to the cortical plate. This is Serine/threonine-protein kinase TAO1 (TAOK1) from Homo sapiens (Human).